A 200-amino-acid polypeptide reads, in one-letter code: Lipopolysaccharide core heptose(II)-phosphate phosphatase (200 aa).

An N-terminal signal peptide occupies residues 1–25; it reads MLAFCRSSLKSKKYFIILLALAAIA.

This sequence belongs to the phosphoglycerate mutase family. Ais subfamily.

It localises to the periplasm. It participates in bacterial outer membrane biogenesis; lipopolysaccharide metabolism. Its function is as follows. Catalyzes the dephosphorylation of heptose(II) of the outer membrane lipopolysaccharide core. The chain is Lipopolysaccharide core heptose(II)-phosphate phosphatase from Escherichia coli O17:K52:H18 (strain UMN026 / ExPEC).